Consider the following 1013-residue polypeptide: MLRELGRTATVKAHGRSVLRPVRGPAGRRQVAFTGVRPSVRVFAEAPAAEQAAKAIKLEDVKEGSEYEGTVTTVEEFGAFVNFGANTNGLVHISKLASGFTKNAKDVVQPGQKVTVKVLSVDAEKKRVSLELKSAVAAEASAEESDDIITEPDREGADATDDDEDVEVELEDGQVEVRADLPGFEDIPFVMEEADMDAEMSEAAIAALEADLDGAEIRYELEAPAYMEEVTGKVARIEDYGVFLEFEWNGKTLTGLLAKDEMKVPSSALSAEAQAALRAEWADTGFEMPAFVELPDDELDVKKYYQPGESVPAFVLESSLVDGRGISLTHFTDEEVSAEAVAAYEELEDDEDEELDKMMADAAGLEDEVLAFDPEALMEEDEGEEAGAAADAGDDAEYEGVSADGLEGANGNYALGATRSGLIKGKNGYQVAPMGLPSRPLNDAVTSSGLAILGTSEVDFDGDEVQLVDYWTSEAFDNIPKDVLKKLGLKMSYTEAGEAEFEERADFEATDVPFYLYGGDVESRAKEFVADLLSDDVDEAELPARAGRAPIVLAAAVQNISAAEVKALREKTGAGMMDCKKALAECAGDAEAAAEWLRKKGLSGADKKAGRIAAEGAVARYIHPGSRLGVLLEVNCETDFVAASEKFQALVNELGMIIAATDCICVSPEDVPEEVLAKEREVEMGKEDLANKPEAIRAKIVEGRLQKMRDQVALTNQATLSNPDKTVAELVKETIAAVGENVKIRRFIKYRLGEGLEKKANDFAAEVAQQTQAKAAAPAAPKKEEPKKEEPKKATVAVSAGTVKELRDKTGAGMMDCKKALAENENDMEKATEWLRMKGLAGADKKAGRIAAEGVVASYIHPGSRLGVLLEVNCETDFVAASEKFNELVNYIAMGIVAGQNVQYVSADEIPAEVFEREKQLEMARDDLKGKPDAIRAKIAEGRAKKIATEMCLLDQPFLTDPSKTVAEAIKESIAAIGEKISVRRFVKFQLGEGLEKKSNDFAAEVAAATGAK.

The N-terminal 43 residues, 1–43 (MLRELGRTATVKAHGRSVLRPVRGPAGRRQVAFTGVRPSVRVF), are a transit peptide targeting the chloroplast. One can recognise an S1 motif 1 domain in the interval 64-133 (GSEYEGTVTT…EKKRVSLELK (70 aa)). Acidic residues predominate over residues 141–150 (SAEESDDIIT). The segment at 141–163 (SAEESDDIITEPDREGADATDDD) is disordered. The region spanning 227 to 331 (MEEVTGKVAR…DGRGISLTHF (105 aa)) is the S1 motif 2 domain. Positions 772–798 (QAKAAAPAAPKKEEPKKEEPKKATVAV) are disordered. Residues 781–793 (PKKEEPKKEEPKK) are compositionally biased toward basic and acidic residues.

Belongs to the EF-Ts family. In terms of assembly, component of the chloroplast ribosome 30S and 70S subunits, as well as polysomes. As to quaternary structure, component of the chloroplast ribosome 70S subunit, and at low levels, present in polysomes. Associates transiently with chloroplast polysomes.

The protein localises to the plastid. The protein resides in the chloroplast. Its function is as follows. Associates with the EF-Tu.GDP complex and induces the exchange of GDP to GTP. It remains bound to the aminoacyl-tRNA.EF-Tu.GTP complex up to the GTP hydrolysis stage on the ribosome. Binds to psbD and psbA mRNAs 5'-untranslated regions (UTRs) in vitro. The protein is Polyprotein of EF-Ts, chloroplastic of Chlamydomonas reinhardtii (Chlamydomonas smithii).